Reading from the N-terminus, the 230-residue chain is 5'-methylthioadenosine/S-adenosylhomocysteine nucleosidase (230 aa).

The Proton acceptor role is filled by glutamate 12. Substrate contacts are provided by residues glycine 78, isoleucine 152, and 173–174 (ME). The active-site Proton donor is the aspartate 197.

The protein belongs to the PNP/UDP phosphorylase family. MtnN subfamily.

It carries out the reaction S-adenosyl-L-homocysteine + H2O = S-(5-deoxy-D-ribos-5-yl)-L-homocysteine + adenine. The catalysed reaction is S-methyl-5'-thioadenosine + H2O = 5-(methylsulfanyl)-D-ribose + adenine. It catalyses the reaction 5'-deoxyadenosine + H2O = 5-deoxy-D-ribose + adenine. The protein operates within amino-acid biosynthesis; L-methionine biosynthesis via salvage pathway; S-methyl-5-thio-alpha-D-ribose 1-phosphate from S-methyl-5'-thioadenosine (hydrolase route): step 1/2. Functionally, catalyzes the irreversible cleavage of the glycosidic bond in both 5'-methylthioadenosine (MTA) and S-adenosylhomocysteine (SAH/AdoHcy) to adenine and the corresponding thioribose, 5'-methylthioribose and S-ribosylhomocysteine, respectively. Also cleaves 5'-deoxyadenosine, a toxic by-product of radical S-adenosylmethionine (SAM) enzymes, into 5-deoxyribose and adenine. This is 5'-methylthioadenosine/S-adenosylhomocysteine nucleosidase from Haemophilus influenzae (strain 86-028NP).